A 290-amino-acid polypeptide reads, in one-letter code: NAD kinase (290 aa).

Asp-75 acts as the Proton acceptor in catalysis. NAD(+)-binding positions include 75 to 76, 148 to 149, Asp-178, 189 to 194, and Gln-247; these read DG, NE, and TAYNIS.

Belongs to the NAD kinase family. It depends on a divalent metal cation as a cofactor.

The protein localises to the cytoplasm. It catalyses the reaction NAD(+) + ATP = ADP + NADP(+) + H(+). Functionally, involved in the regulation of the intracellular balance of NAD and NADP, and is a key enzyme in the biosynthesis of NADP. Catalyzes specifically the phosphorylation on 2'-hydroxyl of the adenosine moiety of NAD to yield NADP. The protein is NAD kinase of Wolinella succinogenes (strain ATCC 29543 / DSM 1740 / CCUG 13145 / JCM 31913 / LMG 7466 / NCTC 11488 / FDC 602W) (Vibrio succinogenes).